A 414-amino-acid polypeptide reads, in one-letter code: Putative L-lactate dehydrogenase (414 aa).

The region spanning 29–406 is the FMN hydroxy acid dehydrogenase domain; it reads RRLGAALTIQ…SPRHVTQLRR (378 aa). Residue Tyr-55 coordinates a 2-oxocarboxylate. Residues Ser-137 and Gln-159 each contribute to the FMN site. Residue Tyr-161 coordinates a 2-oxocarboxylate. Thr-187 provides a ligand contact to FMN. Residue Arg-196 participates in a 2-oxocarboxylate binding. Lys-277 is a binding site for FMN. His-301 functions as the Proton acceptor in the catalytic mechanism. Residue Arg-304 participates in a 2-oxocarboxylate binding. Residues 332–336 and 355–356 each bind FMN; these read DTGIM and GR.

It belongs to the FMN-dependent alpha-hydroxy acid dehydrogenase family. Requires FMN as cofactor.

It catalyses the reaction (S)-lactate + A = pyruvate + AH2. The polypeptide is Putative L-lactate dehydrogenase (lldD) (Mycobacterium tuberculosis (strain ATCC 25618 / H37Rv)).